A 692-amino-acid chain; its full sequence is MAREFSLKNTRNIGIMAHIDAGKTTTTERILYYTGRIHKIGETHEGASQMDWMEQEQERGITITSAATTAQWKGNRVNIIDTPGHVDFTVEVERSLRVLDGAVAVLDAQSGVEPQTETVWRQATTYGVPRIVFVNKMDKIGADFLYSVGTLRDRLQANAHAIQIPIGAEDEFKGIIDLVEKKTYMYGNDLGTDIEETEGFPAEFAEEAEELRASLIEAVADYEEEMMMKYLEGEEITIEELKAGIRKATLTVDFYPVLVGSAFKNKGVQLMLDAVLDYLPSPVDVKAITGINMDTDEEIVRESTDEAPFSALAFKVMTDPYVGKLTFFRVYSGTASAGSYVKNSTKGKRERLGRILQMHANSREEIPMVFAGDIAAAVGLKDTTTGDTLCAEKDNVVLESMTFPEPVISVAIEPKTKADQDKMGQALAKLAEEDPTFRTETNPETGQTIISGMGELHLDIIVDRMRREFKVEANVGAPQVAYRETIRQSAKIDSKFARQSGGRGQYGHVVVEFEPNEEGAGFEFNNKIVGGVVPREYIPAVEHGIEEALQNGILAGYPVVDVKAALVFGSYHDVDSNEMAFKIAASMAVKQLKDKSGAVILEPMMKVEIVIPDEYMGDIMGDVTSRRGRVEGMEARGNAQVVRSMIPLSEMFGYATGLRSRTQGRGTYSMHFDHYEEVPKSVAEEIIKKANG.

The tr-type G domain maps to 8 to 283 (KNTRNIGIMA…AVLDYLPSPV (276 aa)). GTP-binding positions include 17–24 (AHIDAGKT), 81–85 (DTPGH), and 135–138 (NKMD).

The protein belongs to the TRAFAC class translation factor GTPase superfamily. Classic translation factor GTPase family. EF-G/EF-2 subfamily.

It localises to the cytoplasm. Its function is as follows. Catalyzes the GTP-dependent ribosomal translocation step during translation elongation. During this step, the ribosome changes from the pre-translocational (PRE) to the post-translocational (POST) state as the newly formed A-site-bound peptidyl-tRNA and P-site-bound deacylated tRNA move to the P and E sites, respectively. Catalyzes the coordinated movement of the two tRNA molecules, the mRNA and conformational changes in the ribosome. In Exiguobacterium sibiricum (strain DSM 17290 / CCUG 55495 / CIP 109462 / JCM 13490 / 255-15), this protein is Elongation factor G.